The chain runs to 686 residues: Leucine-rich repeat-containing protein 49 (686 aa).

LRR repeat units follow at residues 113 to 134 (HLRL…SNLQ), 135 to 156 (RLIF…STLK), 157 to 178 (SLRV…ENLK), 179 to 200 (NLDV…NHLC), 201 to 222 (DLRV…NGLD), 223 to 244 (SLTE…DNLP), and 245 to 266 (CLQR…SCLA). Residues 279-317 (NPIAQESWYKHTVLQNMMQLRQLDMKRITEEERRVASVV) form the LRRCT domain. 2 disordered regions span residues 311 to 332 (RRVA…HKQS) and 359 to 381 (ASTQ…DGGN). Residues 319 to 341 (KKEEEKKRESHKQSLLKEKKRLT) adopt a coiled-coil conformation.

Part of the neuronal tubulin polyglutamylase complex which contains TPGS1, TPGS2, TTLL1, LRRC49 and NICN1. Interacts with PCM1; TTLL1, TPGS1, TPGS2 and LRRC49.

The protein localises to the cytoplasm. It localises to the cytoskeleton. It is found in the microtubule organizing center. The protein resides in the centrosome. Its subcellular location is the centriolar satellite. Its function is as follows. Subunit of the tubulin polyglutamylase complex (TPGC). The complex mediates cilia and flagella polyglutamylation which is essential for their biogenesis and motility. In Mus musculus (Mouse), this protein is Leucine-rich repeat-containing protein 49 (Lrrc49).